A 350-amino-acid polypeptide reads, in one-letter code: Ferrochelatase (350 aa).

Residues H220 and E301 each coordinate Fe cation.

The protein belongs to the ferrochelatase family.

The protein resides in the cytoplasm. The catalysed reaction is heme b + 2 H(+) = protoporphyrin IX + Fe(2+). The protein operates within porphyrin-containing compound metabolism; protoheme biosynthesis; protoheme from protoporphyrin-IX: step 1/1. Its function is as follows. Catalyzes the ferrous insertion into protoporphyrin IX. The protein is Ferrochelatase of Brucella anthropi (strain ATCC 49188 / DSM 6882 / CCUG 24695 / JCM 21032 / LMG 3331 / NBRC 15819 / NCTC 12168 / Alc 37) (Ochrobactrum anthropi).